Reading from the N-terminus, the 91-residue chain is RING finger protein Z (91 aa).

Residue glycine 2 is the site of N-myristoyl glycine; by host attachment. Residues 35–71 (CKCCWFQDKNLVECSDHYLCLKCISSMLKRGKNCEIC) form an RING-type; atypical zinc finger. A PTAP/PSAP motif motif is present at residues 85–88 (PTAP).

Belongs to the arenaviridae Z protein family. Interacts with protein NP; this interaction probably directs the encapsidated genome to budding sites. Interacts (via RING domain) with polymerase L; this interaction inhibits viral transcription and replication, Z partially blocks the product exit tunnel for the releasing nascent RNA product. Interacts with the glycoprotein complex; this interaction plays a role in virion budding. Interacts with host eIF4E; this interaction results in eIF4E reduced affinity for its substrate, the 5'-m7 G cap structure. Interacts (via late-budding domain) with host TSG101; this interaction is essential for budding and release of viral particles. Interacts with host RPLP0; this interaction may serve to load ribosome-like particles inside the virion. Interacts with host PML; this interaction induces PML bodies redistribution in the cytoplasm upon viral infection. Myristoylation is required for the role of RING finger protein Z in assembly and budding.

It is found in the virion. Its subcellular location is the host cytoplasm. The protein localises to the host perinuclear region. The protein resides in the host cell membrane. In terms of biological role, plays a crucial role in virion assembly and budding. Expressed late in the virus life cycle, it acts as an inhibitor of viral transcription and RNA synthesis by interacting with the viral polymerase L. Presumably recruits the NP encapsidated genome to cellular membranes at budding sites via direct interaction with NP. Plays critical roles in the final steps of viral release by interacting with host TSG101, a member of the vacuolar protein-sorting pathway and using other cellular host proteins involved in vesicle formation pathway. The budding of the virus progeny occurs after association of protein Z with the viral glycoprotein complex SSP-GP1-GP2 at the cell periphery, step that requires myristoylation of protein Z. Also selectively represses protein production by associating with host eIF4E. In cell-based minigenome assay, has an inhibitory effect on the ribonucleoprotein machinery (vRNP), which is responsible for the replication and transcription of the viral genome. The sequence is that of RING finger protein Z from Latino mammarenavirus (isolate Rat/Bolivia/MARU 1924/1965) (LATV).